The primary structure comprises 189 residues: Anthranilate synthase component 2 (189 aa).

The 189-residue stretch at 1 to 189 (MILIIDNYDS…QLLRNFLEYS (189 aa)) folds into the Glutamine amidotransferase type-1 domain. L-glutamine is bound at residue 52-54 (GPG). The active-site Nucleophile; for GATase activity is C79. L-glutamine contacts are provided by residues Q83 and 129 to 130 (SL). Active-site residues include H169 and E171.

In terms of assembly, tetramer of two components I and two components II.

Its subcellular location is the plastid. It is found in the chloroplast. The catalysed reaction is chorismate + L-glutamine = anthranilate + pyruvate + L-glutamate + H(+). Its pathway is amino-acid biosynthesis; L-tryptophan biosynthesis; L-tryptophan from chorismate: step 1/5. The sequence is that of Anthranilate synthase component 2 (trpG) from Pyropia yezoensis (Susabi-nori).